Consider the following 610-residue polypeptide: Aspercryptin biosynthesis cluster-specific transcription regulator atnN (610 aa).

Positions 1 to 26 (MAPKDSQVSASNEMTGNPPSSVQGRS) are enriched in polar residues. The interval 1–27 (MAPKDSQVSASNEMTGNPPSSVQGRSR) is disordered. Residues 30 to 57 (CITCRIRRVKCDEERPHCRRCQSTGRKC) constitute a DNA-binding region (zn(2)-C6 fungal-type). 2 disordered regions span residues 61 to 81 (TPLT…KAGS) and 427 to 493 (AGST…LPRP). Low complexity-rich tracts occupy residues 66–79 (QQPK…AAKA) and 437–474 (SRAG…TPTP).

Its subcellular location is the nucleus. Transcription factor that positively regulates the cluster that mediate the production of aspercryptins, linear lipopeptides built from six amino acids including 2 highly unusual and nonproteogenic amino acids, 2-amino-octanoic acid (2aoa) and 2-amino-dodecanol (2adol). This Emericella nidulans (strain FGSC A4 / ATCC 38163 / CBS 112.46 / NRRL 194 / M139) (Aspergillus nidulans) protein is Aspercryptin biosynthesis cluster-specific transcription regulator atnN.